A 210-amino-acid polypeptide reads, in one-letter code: Orotate phosphoribosyltransferase (210 aa).

Residues arginine 97, lysine 98, and asparagine 125–serine 133 contribute to the 5-phospho-alpha-D-ribose 1-diphosphate site. Residues serine 129 and arginine 157 each contribute to the orotate site.

Belongs to the purine/pyrimidine phosphoribosyltransferase family. PyrE subfamily. Homodimer. Requires Mg(2+) as cofactor.

It carries out the reaction orotidine 5'-phosphate + diphosphate = orotate + 5-phospho-alpha-D-ribose 1-diphosphate. The protein operates within pyrimidine metabolism; UMP biosynthesis via de novo pathway; UMP from orotate: step 1/2. Catalyzes the transfer of a ribosyl phosphate group from 5-phosphoribose 1-diphosphate to orotate, leading to the formation of orotidine monophosphate (OMP). The chain is Orotate phosphoribosyltransferase from Chlamydia pneumoniae (Chlamydophila pneumoniae).